The following is a 373-amino-acid chain: Glutamine synthetase (373 aa).

Alanine 2 is modified (N-acetylalanine). The segment at alanine 2–lysine 25 is required for glutamine-induced ubiquitination by CRL4(CRBN) and proteasomal degradation. An N6-acetyllysine mark is found at lysine 11 and lysine 14. Positions glutamate 24 to arginine 106 constitute a GS beta-grasp domain. At tyrosine 104 the chain carries Phosphotyrosine. In terms of domain architecture, GS catalytic spans leucine 113–asparagine 373. Glutamate 134 contributes to the ATP binding site. The Mn(2+) site is built by glutamate 134, glutamate 136, glutamate 196, and glutamate 203. An ATP-binding site is contributed by glutamate 203–proline 208. Asparagine 246–tryptophan 247 serves as a coordination point for L-glutamate. Histidine 253 is a Mn(2+) binding site. Residues asparagine 255–serine 257, arginine 319, and arginine 324 each bind ATP. Residue arginine 319 coordinates L-glutamate. Tyrosine 336–glutamate 338 lines the ADP pocket. A Mn(2+)-binding site is contributed by glutamate 338. Arginine 340 serves as a coordination point for L-glutamate. Serine 343 is modified (phosphoserine).

Belongs to the glutamine synthetase family. Decamer; composed of two pentamers. Interacts with PALMD. Interacts with RHOJ. Interacts with BEST2; this interaction tethers a fraction of GLUL to the membrane, causing a decrease of cytosolic glutamine synthase (GS) activity and inhibits the chloride channel activity of BEST2 by affecting the gating at the aperture in the absence of intracellular glutamate. Mg(2+) serves as cofactor. Mn(2+) is required as a cofactor. Post-translationally, palmitoylated; undergoes autopalmitoylation. Acetylated by EP300/p300; acetylation is stimulated by increased glutamine levels and promotes ubiquitin-mediated proteasomal degradation. In terms of processing, ubiquitinated by ZNRF1. Ubiquitinated by the DCX (DDB1-CUL4-X-box) E3 ubiquitin-protein ligase complex called CRL4(CRBN), leading to proteasomal degradation.

Its subcellular location is the cytoplasm. The protein resides in the cytosol. The protein localises to the microsome. It is found in the mitochondrion. It localises to the cell membrane. The catalysed reaction is L-glutamate + NH4(+) + ATP = L-glutamine + ADP + phosphate + H(+). It carries out the reaction L-cysteinyl-[protein] + hexadecanoyl-CoA = S-hexadecanoyl-L-cysteinyl-[protein] + CoA. Glutamine synthetase activity is inhibited by methionine sulfoximine (MSO). Functionally, glutamine synthetase that catalyzes the ATP-dependent conversion of glutamate and ammonia to glutamine. Its role depends on tissue localization: in the brain, it regulates the levels of toxic ammonia and converts neurotoxic glutamate to harmless glutamine, whereas in the liver, it is one of the enzymes responsible for the removal of ammonia. Plays a key role in ammonium detoxification during erythropoiesis: the glutamine synthetase activity is required to remove ammonium generated by porphobilinogen deaminase (HMBS) during heme biosynthesis to prevent ammonium accumulation and oxidative stress. Essential for proliferation of fetal skin fibroblasts. Independently of its glutamine synthetase activity, required for endothelial cell migration during vascular development. Involved in angiogenesis by regulating membrane localization and activation of the GTPase RHOJ, possibly by promoting RHOJ palmitoylation. May act as a palmitoyltransferase for RHOJ: able to autopalmitoylate and then transfer the palmitoyl group to RHOJ. Plays a role in ribosomal 40S subunit biogenesis. Through the interaction with BEST2, inhibits BEST2 channel activity by affecting the gating at the aperture in the absence of intracellular L-glutamate, but sensitizes BEST2 to intracellular L-glutamate, which promotes the opening of BEST2 and thus relieves its inhibitory effect on BEST2. The sequence is that of Glutamine synthetase from Canis lupus familiaris (Dog).